Reading from the N-terminus, the 212-residue chain is Probable GTP-binding protein EngB (212 aa).

One can recognise an EngB-type G domain in the interval 27–211 (GPPEIAFAGR…QAAIVLAANG (185 aa)). GTP is bound by residues 35–42 (GRSNVGKS), 62–66 (GRTQE), 89–92 (DMPG), 156–159 (TKTD), and 190–192 (TSS). 2 residues coordinate Mg(2+): Ser42 and Thr64.

This sequence belongs to the TRAFAC class TrmE-Era-EngA-EngB-Septin-like GTPase superfamily. EngB GTPase family. It depends on Mg(2+) as a cofactor.

Necessary for normal cell division and for the maintenance of normal septation. This is Probable GTP-binding protein EngB from Mesorhizobium japonicum (strain LMG 29417 / CECT 9101 / MAFF 303099) (Mesorhizobium loti (strain MAFF 303099)).